The sequence spans 138 residues: Protein SPMIP3 (138 aa).

The sequence is that of Protein SPMIP3 (SPMIP3) from Bos taurus (Bovine).